Here is a 198-residue protein sequence, read N- to C-terminus: Recombination protein RecR (198 aa).

The C4-type zinc finger occupies 57-72 (CSICGHITDQDPCYIC). In terms of domain architecture, Toprim spans 80 to 175 (SVICVVQDPK…KLSRIAHGLP (96 aa)).

It belongs to the RecR family.

In terms of biological role, may play a role in DNA repair. It seems to be involved in an RecBC-independent recombinational process of DNA repair. It may act with RecF and RecO. This chain is Recombination protein RecR, found in Bacillus velezensis (strain DSM 23117 / BGSC 10A6 / LMG 26770 / FZB42) (Bacillus amyloliquefaciens subsp. plantarum).